Here is a 139-residue protein sequence, read N- to C-terminus: Putative pre-16S rRNA nuclease (139 aa).

The protein belongs to the YqgF nuclease family.

The protein resides in the cytoplasm. Its function is as follows. Could be a nuclease involved in processing of the 5'-end of pre-16S rRNA. The polypeptide is Putative pre-16S rRNA nuclease (Streptococcus equi subsp. equi (strain 4047)).